We begin with the raw amino-acid sequence, 217 residues long: 3-oxoadipate CoA-transferase subunit B (217 aa).

Residue Glu50 is part of the active site.

It belongs to the 3-oxoacid CoA-transferase subunit B family. As to quaternary structure, heterodimer.

The enzyme catalyses 3-oxoadipate + succinyl-CoA = 3-oxoadipyl-CoA + succinate. The protein operates within aromatic compound metabolism; beta-ketoadipate pathway; acetyl-CoA and succinyl-CoA from 3-oxoadipate: step 1/2. In Acinetobacter baylyi (strain ATCC 33305 / BD413 / ADP1), this protein is 3-oxoadipate CoA-transferase subunit B (pcaJ).